Consider the following 119-residue polypeptide: MSRSVALAVLALLSLSGLEAIQRTPKIQVYSRHPPENGKPNFLNCYVSGFHPSDIEVDLLKNGEKMGKVEHSDLSFSKDWSFYLLYYTEFTPNEKDEYACRVNHVTLSGPRTVKWDRDM.

An N-terminal signal peptide occupies residues 1 to 20 (MSRSVALAVLALLSLSGLEA). The region spanning 25–114 (PKIQVYSRHP…VTLSGPRTVK (90 aa)) is the Ig-like C1-type domain. Cys-45 and Cys-100 form a disulfide bridge.

This sequence belongs to the beta-2-microglobulin family. As to quaternary structure, heterodimer of an alpha chain and a beta chain. Beta-2-microglobulin is the beta-chain of major histocompatibility complex class I molecules.

Its subcellular location is the secreted. Its function is as follows. Component of the class I major histocompatibility complex (MHC). Involved in the presentation of peptide antigens to the immune system. The sequence is that of Beta-2-microglobulin (B2M) from Papio anubis (Olive baboon).